The following is a 412-amino-acid chain: Multifunctional CCA protein (412 aa).

Positions 8 and 11 each coordinate ATP. Residues Gly8 and Arg11 each coordinate CTP. The Mg(2+) site is built by Glu21 and Asp23. ATP is bound by residues Arg92, Arg138, and Arg141. CTP is bound by residues Arg92, Arg138, and Arg141. The 102-residue stretch at Thr227–Trp328 folds into the HD domain.

It belongs to the tRNA nucleotidyltransferase/poly(A) polymerase family. Bacterial CCA-adding enzyme type 1 subfamily. Monomer. Can also form homodimers and oligomers. Mg(2+) serves as cofactor. Ni(2+) is required as a cofactor.

It carries out the reaction a tRNA precursor + 2 CTP + ATP = a tRNA with a 3' CCA end + 3 diphosphate. It catalyses the reaction a tRNA with a 3' CCA end + 2 CTP + ATP = a tRNA with a 3' CCACCA end + 3 diphosphate. Functionally, catalyzes the addition and repair of the essential 3'-terminal CCA sequence in tRNAs without using a nucleic acid template. Adds these three nucleotides in the order of C, C, and A to the tRNA nucleotide-73, using CTP and ATP as substrates and producing inorganic pyrophosphate. tRNA 3'-terminal CCA addition is required both for tRNA processing and repair. Also involved in tRNA surveillance by mediating tandem CCA addition to generate a CCACCA at the 3' terminus of unstable tRNAs. While stable tRNAs receive only 3'-terminal CCA, unstable tRNAs are marked with CCACCA and rapidly degraded. In Baumannia cicadellinicola subsp. Homalodisca coagulata, this protein is Multifunctional CCA protein.